The chain runs to 137 residues: Small ribosomal subunit protein bS6 (137 aa).

The protein belongs to the bacterial ribosomal protein bS6 family.

In terms of biological role, binds together with bS18 to 16S ribosomal RNA. This Sulfurimonas denitrificans (strain ATCC 33889 / DSM 1251) (Thiomicrospira denitrificans (strain ATCC 33889 / DSM 1251)) protein is Small ribosomal subunit protein bS6.